A 192-amino-acid polypeptide reads, in one-letter code: GTP cyclohydrolase 1 (192 aa).

C82, H85, and C153 together coordinate Zn(2+).

It belongs to the GTP cyclohydrolase I family. In terms of assembly, toroid-shaped homodecamer, composed of two pentamers of five dimers.

It carries out the reaction GTP + H2O = 7,8-dihydroneopterin 3'-triphosphate + formate + H(+). It participates in cofactor biosynthesis; 7,8-dihydroneopterin triphosphate biosynthesis; 7,8-dihydroneopterin triphosphate from GTP: step 1/1. The chain is GTP cyclohydrolase 1 from Rickettsia bellii (strain OSU 85-389).